The chain runs to 507 residues: ATP synthase subunit alpha, chloroplastic (507 aa).

170 to 177 lines the ATP pocket; it reads GDRQTGKT.

Belongs to the ATPase alpha/beta chains family. In terms of assembly, F-type ATPases have 2 components, CF(1) - the catalytic core - and CF(0) - the membrane proton channel. CF(1) has five subunits: alpha(3), beta(3), gamma(1), delta(1), epsilon(1). CF(0) has four main subunits: a, b, b' and c.

It is found in the plastid. The protein resides in the chloroplast thylakoid membrane. The enzyme catalyses ATP + H2O + 4 H(+)(in) = ADP + phosphate + 5 H(+)(out). In terms of biological role, produces ATP from ADP in the presence of a proton gradient across the membrane. The alpha chain is a regulatory subunit. In Gossypium hirsutum (Upland cotton), this protein is ATP synthase subunit alpha, chloroplastic.